A 794-amino-acid chain; its full sequence is Mitochondrial intermediate peptidase (794 aa).

The N-terminal 39 residues, 1-39 (MRVTSSRLLQGGSLVSRVLKRRLNNASRTKKGWFSTRTL), are a transit peptide targeting the mitochondrion. Zn(2+) is bound at residue histidine 581. Residue glutamate 582 is part of the active site. Positions 585 and 588 each coordinate Zn(2+).

Belongs to the peptidase M3 family. Requires Zn(2+) as cofactor.

It localises to the mitochondrion matrix. It catalyses the reaction Release of an N-terminal octapeptide as second stage of processing of some proteins imported into the mitochondrion.. Functionally, cleaves proteins, imported into the mitochondrion, to their mature size. While most mitochondrial precursor proteins are processed to the mature form in one step by mitochondrial processing peptidase (MPP), the sequential cleavage by MIP of an octapeptide after initial processing by MPP is a required step for a subgroup of nuclear-encoded precursor proteins destined for the matrix or the inner membrane. This is Mitochondrial intermediate peptidase (OCT1) from Debaryomyces hansenii (strain ATCC 36239 / CBS 767 / BCRC 21394 / JCM 1990 / NBRC 0083 / IGC 2968) (Yeast).